Reading from the N-terminus, the 237-residue chain is Uridylate kinase (237 aa).

An ATP-binding site is contributed by 11-14 (KLSG). UMP is bound at residue Gly53. Positions 54 and 58 each coordinate ATP. Residues Asp73 and 134–141 (TGNPFFTT) each bind UMP. Residues Thr161, Tyr167, and Asp170 each contribute to the ATP site.

This sequence belongs to the UMP kinase family. In terms of assembly, homohexamer.

The protein resides in the cytoplasm. It carries out the reaction UMP + ATP = UDP + ADP. It functions in the pathway pyrimidine metabolism; CTP biosynthesis via de novo pathway; UDP from UMP (UMPK route): step 1/1. Its activity is regulated as follows. Inhibited by UTP. Catalyzes the reversible phosphorylation of UMP to UDP. This chain is Uridylate kinase, found in Nitrosomonas eutropha (strain DSM 101675 / C91 / Nm57).